We begin with the raw amino-acid sequence, 469 residues long: 24-hydroxycholesterol 7-alpha-hydroxylase (469 aa).

Residues 1–23 (MELISPTVIIILGCLALFLLLQR) form the signal peptide. Transmembrane regions (helical) follow at residues 267 to 287 (GLLL…WTLA), 352 to 372 (VEIL…PFWL), and 412 to 432 (FQCP…ILIL). Position 414 (Cys-414) interacts with heme.

It belongs to the cytochrome P450 family. Heme is required as a cofactor. As to expression, liver specific.

It is found in the endoplasmic reticulum membrane. It localises to the microsome membrane. It catalyses the reaction (24S)-hydroxycholesterol + reduced [NADPH--hemoprotein reductase] + O2 = (24S)-7alpha-dihydroxycholesterol + oxidized [NADPH--hemoprotein reductase] + H2O + H(+). It participates in steroid metabolism; cholesterol degradation. It functions in the pathway lipid metabolism; bile acid biosynthesis. A cytochrome P450 monooxygenase involved in neural cholesterol clearance through bile acid synthesis. Catalyzes 7-alpha hydroxylation of (24S)-hydroxycholesterol, a neural oxysterol that is metabolized to bile acids in the liver. Mechanistically, uses molecular oxygen inserting one oxygen atom into a substrate, and reducing the second into a water molecule, with two electrons provided by NADPH via cytochrome P450 reductase (CPR; NADPH-ferrihemoprotein reductase). The protein is 24-hydroxycholesterol 7-alpha-hydroxylase of Homo sapiens (Human).